Consider the following 203-residue polypeptide: MRASRPVVHPVEAPPPAALAVAAAAVAVEAGVGAGGGAAAHGGENAQPRGVRMKDPPGAPGTPGGLGLRLVQAFFAAAALAVMASTDDFPSVSAFCYLVAAAILQCLWSLSLAVVDIYALLVKRSLRNPQAVCIFTIGDGITGTLTLGAACASAGITVLIGNDLNICANNHCASFETATAMAFISWFALAPSCVLNFWSMASR.

Over 1–63 (MRASRPVVHP…KDPPGAPGTP (63 aa)) the chain is Cytoplasmic. A disordered region spans residues 39–58 (AAHGGENAQPRGVRMKDPPG). A helical membrane pass occupies residues 64–84 (GGLGLRLVQAFFAAAALAVMA). The Extracellular segment spans residues 85-94 (STDDFPSVSA). Residues 95 to 115 (FCYLVAAAILQCLWSLSLAVV) traverse the membrane as a helical segment. The Cytoplasmic portion of the chain corresponds to 116–139 (DIYALLVKRSLRNPQAVCIFTIGD). The helical transmembrane segment at 140–160 (GITGTLTLGAACASAGITVLI) threads the bilayer. Residues 161–177 (GNDLNICANNHCASFET) are Extracellular-facing. Residues 178–198 (ATAMAFISWFALAPSCVLNFW) traverse the membrane as a helical segment. At 199–203 (SMASR) the chain is on the cytoplasmic side.

It belongs to the Casparian strip membrane proteins (CASP) family. As to quaternary structure, homodimer and heterodimers.

The protein resides in the cell membrane. The polypeptide is CASP-like protein 5A2 (Oryza sativa subsp. indica (Rice)).